The chain runs to 544 residues: Ribosomal oxygenase 1 (544 aa).

Residues 1 to 78 form a disordered region; the sequence is MERKHMSALS…HEGERDCREM (78 aa). Residues 10-19 show a composition bias toward polar residues; sequence SIYQSLSGGK. A compositionally biased stretch (basic residues) spans 42–53; the sequence is PSKKATKKKGTK. A compositionally biased stretch (basic and acidic residues) spans 63-78; sequence SSEKEKHEGERDCREM. A JmjC domain is found at 197 to 342; the sequence is CSIRMLNPQA…DLMLKLMPAA (146 aa). Fe cation contacts are provided by His-243, Asp-245, and His-308.

It belongs to the ROX family. NO66 subfamily. The cofactor is Fe(2+).

The protein resides in the nucleus. Its subcellular location is the nucleolus. The protein localises to the nucleoplasm. The enzyme catalyses N(6),N(6)-dimethyl-L-lysyl(36)-[histone H3] + 2 2-oxoglutarate + 2 O2 = L-lysyl(36)-[histone H3] + 2 formaldehyde + 2 succinate + 2 CO2. It carries out the reaction N(6)-methyl-L-lysyl-[protein] + 2-oxoglutarate + O2 = L-lysyl-[protein] + formaldehyde + succinate + CO2. It catalyses the reaction L-histidyl-[protein] + 2-oxoglutarate + O2 = (3S)-3-hydroxy-L-histidyl-[protein] + succinate + CO2. Functionally, oxygenase that can act as both a histone lysine demethylase and a ribosomal histidine hydroxylase. Specifically demethylates 'Lys-4' (H3K4me) and 'Lys-36' (H3K36me) of histone H3, thereby playing a central role in histone code. Preferentially demethylates trimethylated H3 'Lys-4' (H3K4me3) and monomethylated H3 'Lys-4' (H3K4me1) residues, while it has weaker activity for dimethylated H3 'Lys-36' (H3K36me2). Also catalyzes demethylation of non-histone proteins. Also catalyzes the hydroxylation of 60S ribosomal protein L8 on 'His-216', thereby playing a role in ribosome biogenesis. This chain is Ribosomal oxygenase 1 (riox1), found in Danio rerio (Zebrafish).